Reading from the N-terminus, the 237-residue chain is Endonuclease V (237 aa).

Residues Asp-46 and Asp-114 each coordinate Mg(2+).

This sequence belongs to the endonuclease V family. It depends on Mg(2+) as a cofactor.

The protein resides in the cytoplasm. The enzyme catalyses Endonucleolytic cleavage at apurinic or apyrimidinic sites to products with a 5'-phosphate.. Its function is as follows. DNA repair enzyme involved in the repair of deaminated bases. Selectively cleaves double-stranded DNA at the second phosphodiester bond 3' to a deoxyinosine leaving behind the intact lesion on the nicked DNA. The protein is Endonuclease V of Xanthomonas oryzae pv. oryzae (strain PXO99A).